The following is a 120-amino-acid chain: UPF0102 protein PST_1070 (120 aa).

It belongs to the UPF0102 family.

The chain is UPF0102 protein PST_1070 from Stutzerimonas stutzeri (strain A1501) (Pseudomonas stutzeri).